Reading from the N-terminus, the 80-residue chain is Small ribosomal subunit protein bS16 (80 aa).

The protein belongs to the bacterial ribosomal protein bS16 family.

This chain is Small ribosomal subunit protein bS16, found in Wigglesworthia glossinidia brevipalpis.